A 242-amino-acid chain; its full sequence is Orotidine 5'-phosphate decarboxylase (242 aa).

Substrate contacts are provided by residues D16, K37, 64–73, T128, R190, Q199, G219, and R220; that span reads DLKFHDIPNT. K66 functions as the Proton donor in the catalytic mechanism.

The protein belongs to the OMP decarboxylase family. Type 1 subfamily. As to quaternary structure, homodimer.

The catalysed reaction is orotidine 5'-phosphate + H(+) = UMP + CO2. Its pathway is pyrimidine metabolism; UMP biosynthesis via de novo pathway; UMP from orotate: step 2/2. In terms of biological role, catalyzes the decarboxylation of orotidine 5'-monophosphate (OMP) to uridine 5'-monophosphate (UMP). This chain is Orotidine 5'-phosphate decarboxylase, found in Prochlorococcus marinus (strain AS9601).